The chain runs to 262 residues: Cap-specific mRNA (nucleoside-2'-O-)-methyltransferase (262 aa).

One can recognise a RrmJ-type SAM-dependent 2'-O-MTase domain in the interval 34–226 (TRRPRCWRKL…ERYLICFNKL (193 aa)). Glycine 67 and aspartate 140 together coordinate S-adenosyl-L-methionine. Lysine 180 functions as the Proton acceptor in the catalytic mechanism.

The catalysed reaction is a 5'-end (N(7)-methyl 5'-triphosphoguanosine)-ribonucleoside in mRNA + S-adenosyl-L-methionine = a 5'-end (N(7)-methyl 5'-triphosphoguanosine)-(2'-O-methyl-ribonucleoside) in mRNA + S-adenosyl-L-homocysteine + H(+). Its function is as follows. S-adenosyl-L-methionine-dependent methyltransferase that mediates mRNA cap 2'-O-ribose methylation to the 5'-cap structure of late viral transcripts. The polypeptide is Cap-specific mRNA (nucleoside-2'-O-)-methyltransferase (Lepidoptera (butterflies and moths)).